A 775-amino-acid chain; its full sequence is Serine/threonine-protein kinase ppk6 (775 aa).

Ser-132 and Ser-134 each carry phosphoserine. The 256-residue stretch at 503–758 (YTTIKELGIG…IEETLQHHWF (256 aa)) folds into the Protein kinase domain. Residues 509–517 (LGIGAYGQV) and Lys-533 each bind ATP. Asp-636 acts as the Proton acceptor in catalysis.

Belongs to the protein kinase superfamily. Ser/Thr protein kinase family.

It localises to the cytoplasm. Its subcellular location is the nucleus. The enzyme catalyses L-seryl-[protein] + ATP = O-phospho-L-seryl-[protein] + ADP + H(+). It catalyses the reaction L-threonyl-[protein] + ATP = O-phospho-L-threonyl-[protein] + ADP + H(+). The protein is Serine/threonine-protein kinase ppk6 (ppk6) of Schizosaccharomyces pombe (strain 972 / ATCC 24843) (Fission yeast).